A 308-amino-acid chain; its full sequence is UDP-N-acetylenolpyruvoylglucosamine reductase (308 aa).

An FAD-binding PCMH-type domain is found at V32–G196. Residue R176 is part of the active site. The Proton donor role is filled by S225. Residue E296 is part of the active site.

Belongs to the MurB family. Requires FAD as cofactor.

The protein localises to the cytoplasm. The catalysed reaction is UDP-N-acetyl-alpha-D-muramate + NADP(+) = UDP-N-acetyl-3-O-(1-carboxyvinyl)-alpha-D-glucosamine + NADPH + H(+). It functions in the pathway cell wall biogenesis; peptidoglycan biosynthesis. Functionally, cell wall formation. In Legionella pneumophila (strain Corby), this protein is UDP-N-acetylenolpyruvoylglucosamine reductase.